The primary structure comprises 441 residues: DILAAFRVTPQPGVPPEEAGAAVAAESSTGTWTTVWTDGLTSLDRYKGRCYHIEPVPGEETQFIAYVAYPLDLFEEGSVTNMFTSIVGNVFGFKALRALRLEDLRIPVAYVKTFQGPPHGIQVERDKLNKYGRPLLGCTIKPKLGLSAKXYGRAVYECLRGGLDFTKDDENVNSQPFMRWRDRFLFCAEAIYKAQAETGEIKGHYLNATAGTCEDMMKRAVFARELGVPIVMHDYLTGGFTANTTLAHYCRDNGLLLHIHRAMHAVIDRQKNHGMHFRVLAKALRMSGGDHIHSGXVVGKLEGEREITLGFVDLLXXDFIEKVRSRGIXFTQDWVSLPGVLPVASGGIHVWHMPALTEIFGDDSVLQFGGGTLGHPWGNAPGAVRNRVALEACVQARNEGRDLAREGNEIIRXACKWSPELAAACEVWKEIKFEFEAMDTL.

Substrate-binding residues include asparagine 89 and threonine 139. The active-site Proton acceptor is lysine 141. Substrate is bound at residue lysine 143. Mg(2+)-binding residues include lysine 167, aspartate 169, and glutamate 170. Lysine 167 is subject to N6-carboxylysine. Histidine 260 acts as the Proton acceptor in catalysis. The substrate site is built by arginine 261, histidine 293, and serine 345.

Belongs to the RuBisCO large chain family. Type I subfamily. As to quaternary structure, heterohexadecamer of 8 large chains and 8 small chains; disulfide-linked. The disulfide link is formed within the large subunit homodimers. Requires Mg(2+) as cofactor. In terms of processing, the disulfide bond which can form in the large chain dimeric partners within the hexadecamer appears to be associated with oxidative stress and protein turnover.

Its subcellular location is the plastid. The protein resides in the chloroplast. It carries out the reaction 2 (2R)-3-phosphoglycerate + 2 H(+) = D-ribulose 1,5-bisphosphate + CO2 + H2O. The enzyme catalyses D-ribulose 1,5-bisphosphate + O2 = 2-phosphoglycolate + (2R)-3-phosphoglycerate + 2 H(+). RuBisCO catalyzes two reactions: the carboxylation of D-ribulose 1,5-bisphosphate, the primary event in carbon dioxide fixation, as well as the oxidative fragmentation of the pentose substrate in the photorespiration process. Both reactions occur simultaneously and in competition at the same active site. This is Ribulose bisphosphate carboxylase large chain from Symphoricarpos albus (Common snowberry).